An 81-amino-acid chain; its full sequence is Protein Vpu (81 aa).

Over methionine 1–leucine 7 the chain is Extracellular. The chain crosses the membrane as a helical span at residues alanine 8–isoleucine 28. The Cytoplasmic segment spans residues glutamate 29–leucine 81. A disordered region spans residues alanine 50–leucine 81. Residues serine 53 and serine 57 each carry the phosphoserine; by host CK2 modification. Over residues serine 53–leucine 64 the composition is skewed to acidic residues. Positions methionine 70–leucine 81 are enriched in basic and acidic residues.

It belongs to the HIV-1 VPU protein family. Homopentamer. Interacts with host CD4 and BRTC; these interactions induce proteasomal degradation of CD4. Interacts with host BST2; this interaction leads to the degradation of host BST2. Interacts with host FBXW11. Interacts with host AP1M1; this interaction plays a role in the mistrafficking and subsequent degradation of host BST2. Interacts with host RANBP2; this interaction allows Vpu to down-regulate host BLM sumoylation. Phosphorylated by host CK2. This phosphorylation is necessary for interaction with human BTRC and degradation of CD4.

The protein localises to the host membrane. Its activity is regulated as follows. Ion channel activity is inhibited by hexamethylene amiloride in vitro. Its function is as follows. Enhances virion budding by targeting host CD4 and Tetherin/BST2 to proteasome degradation. Degradation of CD4 prevents any unwanted premature interactions between viral Env and its host receptor CD4 in the endoplasmic reticulum. Degradation of antiretroviral protein Tetherin/BST2 is important for virion budding, as BST2 tethers new viral particles to the host cell membrane. Mechanistically, Vpu bridges either CD4 or BST2 to BTRC, a substrate recognition subunit of the Skp1/Cullin/F-box protein E3 ubiquitin ligase, induces their ubiquitination and subsequent proteasomal degradation. The alteration of the E3 ligase specificity by Vpu seems to promote the degradation of host IKBKB, leading to NF-kappa-B down-regulation and subsequent apoptosis. Acts as a viroporin that forms an oligomeric ion channel in membranes. Modulates the host DNA repair mechanisms to promote degradation of nuclear viral cDNA in cells that are already productively infected in order to suppress immune sensing and proviral hyper-integration (superinfection). Manipulates PML-NBs and modulates SUMOylation of host BLM protein thereby enhancing its DNA-end processing activity toward viral unintegrated linear DNA. Also inhibits RAD52-mediated homologous repair of viral cDNA, preventing the generation of dead-end circular forms of single copies of the long terminal repeat and permitting sustained nucleolytic attack. This Homo sapiens (Human) protein is Protein Vpu.